A 369-amino-acid chain; its full sequence is Nudix hydrolase 8 (369 aa).

The Nudix hydrolase domain occupies 188 to 318; it reads SHQVGVGGFV…GDKMFKRVIE (131 aa). Positions 225–246 match the Nudix box motif; the sequence is GFINESEEIFSGAVREVKEETG. Residues glutamate 240 and glutamate 244 each contribute to the Mg(2+) site.

This sequence belongs to the Nudix hydrolase family. It depends on Mg(2+) as a cofactor. The cofactor is Mn(2+). In terms of tissue distribution, expressed in roots, stems and, at lower level, leaves.

Functionally, probably mediates the hydrolysis of some nucleoside diphosphate derivatives. May be involved in plant immunity and act as a positive regulator of defense response through salicylic acid (SA) signaling. The protein is Nudix hydrolase 8 (NUDT8) of Arabidopsis thaliana (Mouse-ear cress).